The following is a 1013-amino-acid chain: MGEVAATVEPLAAVKSKSMRSRKRRQRRRRQIAYLAICGLSVAIFGFALATLIRPTTAQADADPGSWRKGYVGHGTTHEQLGQPHWPPVQYTVYRPTTNYTKAPPPPTSAMNPIFNFTHFLYDKVLYRDEPIPEGYIVVKNSDTLSLGPKVEENDWRDLLAHYWMVLIWVVILVVLIIVIPFIAVCYCCFCCCRRCRQGCPPCTSKQDAQRRFCCGICLLILIIGLIFGIIIAFVTNKMIDSGFAETSETMKRGSEDTCTYLKDVADHVHHLMMYNYEEMETHVLDQLTHAHRHIFLDLSDTSESNSLAEMERVLENMPEALELMRQVEKMEKDLRFYGSQLRDGVRGIKRDVNFAVANLCQLQMCQKFLISSNIEHIDSSQCLHFDNLPNTKEFVEGMENIVASEYYAIPQRGLSRLKKVSDKVKTQLSFVVPPMMRDLTKGRTIFREHATNVRNIVEGVLSDIHIKTLHSTKSFEDVYERFGHDRNVVSLIVCLLILLVLFILIFALLCGCFGRRRTGYGDECCSKSTGATCLLLAILLIFCVFSFIALVGLFYFMLGMVTYQGACAPLRDQENNTLFRQLDASIDLNHYLPPSESNKEVVQPLKMSSAIKACHANQTIFDMMRQHNIYDINDLTRIKVMSHSQENTDSIKVFDEDLSTVVLLTKEERDELKTAGESKLAKYHSSLYMPSLCTQFTPMNLNALSEQLYKLSNDLEYPAYGWAKVSFWNEGLNTKAFYRNFVPKLTSLVEKMKANLKKIDELISYENHDFTNTIKILTATAINSEQFIQTRGKDYINALGGNLTNSIDQMIDDYIDMIIKEANESVGHCAPLSYIYYRGVDLICHRIVDPINGFWVGILLCALLFLPILFVAHRLMCLYKKIYPYLATVGAAGVVEGGSDYLYDAYSERDREHVPLANVPKKRRKAYERRREQQDYFEDASPSVSRGNRSGGDRGGGGGDGAPGSSSMRYNDMAPTHWDHEPPRYHNPPAAPPSSEYERPPPYYYPGASEQD.

The helical transmembrane segment at 32-52 threads the bilayer; the sequence is IAYLAICGLSVAIFGFALATL. 2 N-linked (GlcNAc...) asparagine glycosylation sites follow: Asn99 and Asn116. The next 3 helical transmembrane spans lie at 215-235, 489-509, and 535-555; these read CGIC…IAFV, VVSL…IFAL, and LLLA…VGLF. N-linked (GlcNAc...) asparagine glycosylation is found at Asn576, Asn618, Asn803, and Asn824. A helical transmembrane segment spans residues 852 to 872; it reads INGFWVGILLCALLFLPILFV. A disordered region spans residues 918–1013; it reads ANVPKKRRKA…YYYPGASEQD (96 aa). Residue Asn949 is glycosylated (N-linked (GlcNAc...) asparagine). Over residues 950–963 the composition is skewed to gly residues; it reads RSGGDRGGGGGDGA.

This sequence belongs to the prominin family.

The protein resides in the membrane. The sequence is that of Prominin-like protein from Drosophila melanogaster (Fruit fly).